Consider the following 240-residue polypeptide: Ribonuclease T2 (240 aa).

Positions Met-1–Ala-19 are cleaved as a signal peptide. Cys-41 and Cys-46 are oxidised to a cystine. His-56 is an active-site residue. Cystine bridges form between Cys-66-Cys-110, Cys-173-Cys-227, and Cys-191-Cys-201. N-linked (GlcNAc...) asparagine glycosylation is found at Asn-67 and Asn-73. Active-site residues include Glu-103 and His-107.

Belongs to the RNase T2 family. As to expression, ubiquitous.

Its subcellular location is the lysosome lumen. It localises to the endoplasmic reticulum lumen. The protein localises to the secreted. The catalysed reaction is a ribonucleotidyl-ribonucleotide-RNA + H2O = a 3'-end 3'-phospho-ribonucleotide-RNA + a 5'-end dephospho-ribonucleoside-RNA + H(+). Has ribonuclease activity, with higher activity at acidic pH. Probably is involved in lysosomal degradation of ribosomal RNA. In Danio rerio (Zebrafish), this protein is Ribonuclease T2 (rnaset2).